The chain runs to 421 residues: Histone-lysine N-methyltransferase SUV39H1 (421 aa).

Positions 46-104 (FEVEYLWNYKKVQDQELYLVKWKYYPDSESTWEPRHHLKCNNLLKQFHLDLERELLRRA) constitute a Chromo domain. Residues 189 to 249 (AGCKCRDCFS…SCPNRVVQKG (61 aa)) enclose the Pre-SET domain. Residues Cys-191, Cys-193, Cys-196, Cys-203, Cys-204, Cys-231, Cys-235, Cys-237, and Cys-241 each contribute to the Zn(2+) site. An SET domain is found at 252-375 (YKFCIFRTSD…TGEELTFDYN (124 aa)). S-adenosyl-L-methionine is bound by residues 263–265 (RGW), Tyr-306, and 332–333 (NH). Residues Cys-335, Cys-409, Cys-411, and Cys-416 each coordinate Zn(2+). The region spanning 405-421 (VRVECKCGVSSCRKYLF) is the Post-SET domain.

Belongs to the class V-like SAM-binding methyltransferase superfamily. Histone-lysine methyltransferase family. Suvar3-9 subfamily.

It is found in the nucleus. It localises to the chromosome. The protein resides in the centromere. The catalysed reaction is L-lysyl(9)-[histone H3] + 3 S-adenosyl-L-methionine = N(6),N(6),N(6)-trimethyl-L-lysyl(9)-[histone H3] + 3 S-adenosyl-L-homocysteine + 3 H(+). Functionally, histone methyltransferase that specifically trimethylates 'Lys-9' of histone H3 using monomethylated H3 'Lys-9' as substrate. H3 'Lys-9' trimethylation represents a specific tag for epigenetic transcriptional repression by recruiting HP1 (CBX1, CBX3 and/or CBX5) proteins to methylated histones. Mainly functions in heterochromatin regions, thereby playing a central role in the establishment of constitutive heterochromatin at pericentric and telomere regions. H3 'Lys-9' trimethylation is also required to direct DNA methylation at pericentric repeats. SUV39H1 is targeted to histone H3 via its interaction with RB1 and is involved in many processes. In Xenopus laevis (African clawed frog), this protein is Histone-lysine N-methyltransferase SUV39H1 (suv39h1).